Reading from the N-terminus, the 321-residue chain is MLIVGAGPAGLYGAYYAGFRGMSVALMDSLPEAGGQVTAMYPEKVIYDIAGLPAVRGRELIDALLIQANQFSPTYLLGQQAAELAHKPDAVVVTSSQGLRVRAKVVVITGGLGTFAPRPLPTGTAHLGRGLVYFVPKLDVHTGQDVIVVGGGDSAFDWALALEPIARSVTLVHRRDRFRAHMSTVERVEASSVEILTFTEVAMVHGEEWIEKVELVQTRTGDRHVRPAQAVVAALGFTADLGPLTRWNLTIDKRHIVVDPTMATGVERIFAAGDITEYPGKVRLIATGFGEAATAVNNAAPLVDPSAKIFPGHSSDDGTGG.

FAD is bound by residues Asp28, Gln36, Tyr41, Ala81, Phe115, Asp274, and Ser315.

It belongs to the ferredoxin--NADP reductase type 2 family. Homodimer. FAD is required as a cofactor.

It carries out the reaction 2 reduced [2Fe-2S]-[ferredoxin] + NADP(+) + H(+) = 2 oxidized [2Fe-2S]-[ferredoxin] + NADPH. In Frankia casuarinae (strain DSM 45818 / CECT 9043 / HFP020203 / CcI3), this protein is Ferredoxin--NADP reductase.